A 383-amino-acid chain; its full sequence is 8-amino-7-oxononanoate synthase (383 aa).

Positions 27 and 34 each coordinate substrate. A pyridoxal 5'-phosphate-binding site is contributed by 114–115 (GY). His-139 is a binding site for substrate. Pyridoxal 5'-phosphate-binding positions include Ser-187, 212–215 (DDAH), and 232–235 (TLSK). Position 235 is an N6-(pyridoxal phosphate)lysine (Lys-235). Position 344 (Thr-344) interacts with substrate.

The protein belongs to the class-II pyridoxal-phosphate-dependent aminotransferase family. BioF subfamily. As to quaternary structure, homodimer. It depends on pyridoxal 5'-phosphate as a cofactor.

It catalyses the reaction 6-carboxyhexanoyl-[ACP] + L-alanine + H(+) = (8S)-8-amino-7-oxononanoate + holo-[ACP] + CO2. It participates in cofactor biosynthesis; biotin biosynthesis. Functionally, catalyzes the decarboxylative condensation of pimeloyl-[acyl-carrier protein] and L-alanine to produce 8-amino-7-oxononanoate (AON), [acyl-carrier protein], and carbon dioxide. In Methylorubrum extorquens (strain CM4 / NCIMB 13688) (Methylobacterium extorquens), this protein is 8-amino-7-oxononanoate synthase.